Consider the following 121-residue polypeptide: Large ribosomal subunit protein uL22 (121 aa).

Belongs to the universal ribosomal protein uL22 family. As to quaternary structure, part of the 50S ribosomal subunit.

Its function is as follows. This protein binds specifically to 23S rRNA; its binding is stimulated by other ribosomal proteins, e.g. L4, L17, and L20. It is important during the early stages of 50S assembly. It makes multiple contacts with different domains of the 23S rRNA in the assembled 50S subunit and ribosome. In terms of biological role, the globular domain of the protein is located near the polypeptide exit tunnel on the outside of the subunit, while an extended beta-hairpin is found that lines the wall of the exit tunnel in the center of the 70S ribosome. The protein is Large ribosomal subunit protein uL22 of Synechococcus sp. (strain CC9902).